The sequence spans 273 residues: NAD kinase (273 aa).

Asp53 acts as the Proton acceptor in catalysis. NAD(+) is bound by residues 53-54 (DG), Arg58, 128-129 (NE), Asp157, 168-173 (TAYNFS), and Ala192.

Belongs to the NAD kinase family. It depends on a divalent metal cation as a cofactor.

Its subcellular location is the cytoplasm. The catalysed reaction is NAD(+) + ATP = ADP + NADP(+) + H(+). In terms of biological role, involved in the regulation of the intracellular balance of NAD and NADP, and is a key enzyme in the biosynthesis of NADP. Catalyzes specifically the phosphorylation on 2'-hydroxyl of the adenosine moiety of NAD to yield NADP. In Finegoldia magna (strain ATCC 29328 / DSM 20472 / WAL 2508) (Peptostreptococcus magnus), this protein is NAD kinase.